We begin with the raw amino-acid sequence, 361 residues long: Chorismate synthase (361 aa).

An NADP(+)-binding site is contributed by R48. FMN is bound by residues 125-127 (RSS), 238-239 (NA), G278, 293-297 (KPTSS), and R319.

It belongs to the chorismate synthase family. As to quaternary structure, homotetramer. FMNH2 serves as cofactor.

The catalysed reaction is 5-O-(1-carboxyvinyl)-3-phosphoshikimate = chorismate + phosphate. The protein operates within metabolic intermediate biosynthesis; chorismate biosynthesis; chorismate from D-erythrose 4-phosphate and phosphoenolpyruvate: step 7/7. Functionally, catalyzes the anti-1,4-elimination of the C-3 phosphate and the C-6 proR hydrogen from 5-enolpyruvylshikimate-3-phosphate (EPSP) to yield chorismate, which is the branch point compound that serves as the starting substrate for the three terminal pathways of aromatic amino acid biosynthesis. This reaction introduces a second double bond into the aromatic ring system. The polypeptide is Chorismate synthase (Aliivibrio fischeri (strain MJ11) (Vibrio fischeri)).